Here is a 624-residue protein sequence, read N- to C-terminus: Vitamin B12 transporter BtuB (624 aa).

An N-terminal signal peptide occupies residues methionine 1 to alanine 21. The short motif at asparagine 31–asparagine 38 is the TonB box element. Positions proline 43–glutamate 157 constitute a TBDR plug domain. Residues leucine 88, serine 90, asparagine 97, and isoleucine 115–serine 116 contribute to the cyanocob(III)alamin site. One can recognise a TBDR beta-barrel domain in the interval threonine 160 to phenylalanine 624. A run of 3 beta stranded transmembrane segments spans residues serine 163–glycine 170, tyrosine 174–glutamine 183, and threonine 189–serine 200. Aspartate 204, glutamine 216, aspartate 218, and aspartate 220 together coordinate Ca(2+). A run of 2 beta stranded transmembrane segments spans residues tyrosine 222–asparagine 232 and glutamate 237–aspartate 253. Tyrosine 254, aspartate 255, and aspartate 266 together coordinate Ca(2+). A run of 17 beta stranded transmembrane segments spans residues arginine 268 to serine 282, glycine 284 to asparagine 301, threonine 314 to glutamine 330, leucine 333 to tryptophan 342, tyrosine 358 to glycine 374, valine 376 to aspartate 386, phenylalanine 390 to valine 405, tyrosine 408 to asparagine 422, glutamate 440 to threonine 449, leucine 455 to asparagine 464, tyrosine 481 to phenylalanine 498, proline 502 to alanine 517, arginine 525 to tryptophan 537, aspartate 543 to serine 557, proline 568 to serine 582, isoleucine 595 to valine 606, and proline 612 to phenylalanine 624. Threonine 314 is a cyanocob(III)alamin binding site. Position 525 (arginine 525) interacts with cyanocob(III)alamin. The TonB C-terminal box motif lies at tyrosine 607 to phenylalanine 624.

Belongs to the TonB-dependent receptor family. BtuB (TC 1.B.14.3.1) subfamily.

The protein resides in the cell outer membrane. Involved in the active translocation of vitamin B12 (cyanocobalamin) across the outer membrane to the periplasmic space. It derives its energy for transport by interacting with the trans-periplasmic membrane protein TonB. This is Vitamin B12 transporter BtuB from Yersinia pseudotuberculosis serotype O:1b (strain IP 31758).